The primary structure comprises 1883 residues: MSQALNESANSIGSDEQDDTREEANGTDHSGSGSGSGSSGSDSDSDSSSGNSSDGRSSPEPEDKSLSVAGFPPTAAAAQADSKTNGFTDDQEDSSSDGSSGSDSDSDAEGPSDQRNQSINNANTSSSLPKPEQNEEEDNETEAGQQQPASDASADESSDSSANVSPTSSSSSSEEEEEDYRPKRTRQARKPPTAAEKSKKAPAPKNKKKTWDSDESDESEDSDDEVSTAQKRKPAATTSRSKLAQQQQRRRVKPFSSEDSDDDDASKRCATRRKGAAVSYKEASEDEATDSEDLLEFEYDESQAATTAATAEEEEKCETIERILAQRAGKRGCTGNQTTIYAIEENGFDPHAGFDEKQTPDAETEAQFLIKWKGWSYIHNTWESEATLRDMKAKGMKKLDNFIKKEKEQAYWRRYAGPEDIDYFECQLELQHELLKSYNNVDRIIAKGSKPDDGTEEYLCKWQSLPYAESTWEDAALVLRKWQRCAEQFNDRESSKCTPSRHCRVIKYRPKFSRIKNQPEFLSSGLTLRDYQMDGLNWLLHSWCKENSVILADEMGLGKTIQTICFLYSLFKIHHLYGPFLCVVPLSTMTAWQREFDLWAPDMNVVTYLGDIKSRELIQQYEWQFESSKRLKFNCILTTYEIVLKDKQFLGTLQWAALLVDEAHRLKNDDSLLYKSLKEFDTNHRLLITGTPLQNSLKELWALLHFIMPDKFDTWENFEVQHGNAEDKGYTRLHQQLEPYILRRVKKDVEKSLPAKVEQILRVEMTSLQKQYYKWILTKNFDALRKGKRGSTSTFLNIVIELKKCCNHAALIRPSEFELMGLQQDEALQTLLKGSGKLVLLDKLLCRLKETGHRVLIFSQMVRMLDVLADYLQKRHFPFQRLDGSIKGEMRRQALDHFNAEGSQDFCFLLSTRAGGLGINLATADTVIIFDSDWNPQNDLQAQARAHRIGQKNQVNIYRLVTARSVEEQIVERAKQKMVLDHLVIQRMDTTGRTVLDKSGNGHSSNSNPFNKDDLSAILKFGAEELFKDEQEHDDDLVCDIDEILRRAETRNEDPEMPADDLLSAFKVASIAAFEEEPSDSVSKQDQNAAGEEDDSKDWDDIIPEGFRKAIDDQERAKEMEDLYLPPRRKTAANQNEGKRGAGKGGKGKQQADDSGGDSDYELGSDGSGDDGRPRKRGRPTMKEKITGFTDAELRRFIRSYKKFPAPLHRMEAIACDAELQEKPLAELKRLGEMLHDRCVQFLHEHKEEESKTAATDETPGAKQRRARATFSVKLGGVSFNAKKLLACEQELQPLNEIMPSMPEERQQWSFNIKTRAPVFDVDWGIEEDTKLLCGIYQYGIGSWEQMKLDPTLKLTDKILLNDTRKPQAKQLQTRAEYLLKIIKKNVELTKGGQRRQRRPRASRANDAKAASQSASSTIDAKPHDGEDAAGDARTVAESSNSQVDPSTASPHNAPATEQHGDPAKKAKKSKARSKKTSASDNNGNKPMHFTANNEPRALEVLGDLDPSIFNECKEKMRPVKKALKALDQPDVSLSDQDQLQHTRDCLLQIGKQIDVCLNPYAETEKKEWRSNLWYFVSKFTELDAKRLFKIYKHALKQKAGGDGEAKGKDKGSSGSPAKSKPNGVTTEEKEKERDRSGGKKKKKDKDKERSGQARYPETGIPTSGRYADPPLKRKRDENDADASSGLAGAPGGGIGDNLKSMSFKRLNMDRHEDRKKHHRGPDYYGGSGPPMGSGSYEGGSNSRRQGPTSPSTPRTGRGGYDPPPAPSGYTPEMERWQSRDRYSQDYKRDRYDGYGRSGGGQGSYHRERDRRPEKRRYPSGLPPHPYSSHYLPPNYYGLPNGAVPGLPPPSSVYRSDPRGYPVMPRDYPADYRRSDYERRTQT.

Over residues M1–S14 the composition is skewed to polar residues. Positions M1 to D293 are disordered. Residues S39–R56 are compositionally biased toward low complexity. Residues Q114 to L128 show a composition bias toward polar residues. The span at D159 to S172 shows a compositional bias: low complexity. Positions S213 to V226 are enriched in acidic residues. The span at A236–Q247 shows a compositional bias: polar residues. The segment covering S284–D293 has biased composition (acidic residues). Chromo domains are found at residues E318–R414 and N439–R501. Residues L540 to D710 enclose the Helicase ATP-binding domain. D553 to T560 serves as a coordination point for ATP. The short motif at D661–H664 is the DEAH box element. In terms of domain architecture, Helicase C-terminal spans L840–T991. 5 disordered regions span residues F1074–K1185, H1246–R1265, T1390–T1491, K1599–S1829, and P1848–T1883. Over residues G1091 to I1103 the composition is skewed to acidic residues. Residues G1106–E1121 are compositionally biased toward basic and acidic residues. The segment covering G1393–A1402 has biased composition (basic residues). The span at A1437–P1451 shows a compositional bias: polar residues. The segment covering K1466 to K1476 has biased composition (basic residues). The segment at L1505 to A1606 is CHD1 helical C-terminal domain (CHCT). Positions A1600–G1612 are enriched in basic and acidic residues. Over residues S1613 to P1622 the composition is skewed to low complexity. Over residues T1627–G1638 the composition is skewed to basic and acidic residues. A compositionally biased stretch (gly residues) spans Y1724–E1738. The segment covering N1742 to R1755 has biased composition (polar residues). Basic and acidic residues-rich tracts occupy residues E1773–G1794, Y1805–R1817, and Y1868–T1883.

This sequence belongs to the SNF2/RAD54 helicase family. In terms of assembly, monomer. Component of the SAGA complex. Interacts with SSRP1.

Its subcellular location is the nucleus. It is found in the chromosome. It catalyses the reaction ATP + H2O = ADP + phosphate + H(+). Its function is as follows. ATP-dependent chromatin-remodeling factor which functions as substrate recognition component of the transcription regulatory histone acetylation (HAT) complex SAGA. Regulates polymerase II transcription. Also required for efficient transcription by RNA polymerase I, and more specifically the polymerase I transcription termination step. Regulates negatively DNA replication. Not only involved in transcription-related chromatin remodeling, but also required to maintain a specific chromatin configuration across the genome. Involved in assembly of active chromatin. Required for maintaining open chromatin and pluripotency in embryonic stem cells and is important for wing development and fertility. Is essential for the incorporation of histone H3.3 and assembly of paternal chromatin. Required for replication-independent nucleosome assembly in the decondensing male pronucleus. The protein is Chromodomain-helicase-DNA-binding protein 1 (Chd1) of Drosophila melanogaster (Fruit fly).